A 455-amino-acid polypeptide reads, in one-letter code: Ribulose bisphosphate carboxylase large chain (455 aa).

Lysine 5 bears the N6,N6,N6-trimethyllysine mark. 2 residues coordinate substrate: asparagine 114 and threonine 164. The Proton acceptor role is filled by lysine 166. Residue lysine 168 coordinates substrate. Mg(2+) is bound by residues lysine 192, aspartate 194, and glutamate 195. Residue lysine 192 is modified to N6-carboxylysine. Histidine 285 serves as the catalytic Proton acceptor. Substrate contacts are provided by arginine 286, histidine 318, and serine 370.

This sequence belongs to the RuBisCO large chain family. Type I subfamily. Heterohexadecamer of 8 large chains and 8 small chains. The cofactor is Mg(2+).

The protein resides in the plastid. Its subcellular location is the chloroplast. The catalysed reaction is 2 (2R)-3-phosphoglycerate + 2 H(+) = D-ribulose 1,5-bisphosphate + CO2 + H2O. It carries out the reaction D-ribulose 1,5-bisphosphate + O2 = 2-phosphoglycolate + (2R)-3-phosphoglycerate + 2 H(+). Functionally, ruBisCO catalyzes two reactions: the carboxylation of D-ribulose 1,5-bisphosphate, the primary event in carbon dioxide fixation, as well as the oxidative fragmentation of the pentose substrate in the photorespiration process. Both reactions occur simultaneously and in competition at the same active site. The protein is Ribulose bisphosphate carboxylase large chain of Tamarindus indica (Tamarind).